Consider the following 128-residue polypeptide: Probable 4-amino-4-deoxy-L-arabinose-phosphoundecaprenol flippase subunit ArnF (128 aa).

At 1–2 (MG) the chain is on the cytoplasmic side. A helical transmembrane segment spans residues 3-23 (LMWGLFSVIIASVAQLSLGFA). Residues 24–35 (ASHLPPMTHLWD) are Periplasmic-facing. The chain crosses the membrane as a helical span at residues 36 to 56 (FIAALLAFGLDARILLLGLLG). At 57–76 (YLLSVFCWYKTLHKLALSKA) the chain is on the cytoplasmic side. Residues 77 to 97 (YALLSMSYVLVWIASMVLPGW) traverse the membrane as a helical segment. The Periplasmic portion of the chain corresponds to 98–100 (EGT). A helical transmembrane segment spans residues 101 to 121 (FSLKALLGVACIMSGLMLIFL). Topologically, residues 122–128 (PMTKQRY) are cytoplasmic.

It belongs to the ArnF family. In terms of assembly, heterodimer of ArnE and ArnF.

The protein localises to the cell inner membrane. Its pathway is bacterial outer membrane biogenesis; lipopolysaccharide biosynthesis. Functionally, translocates 4-amino-4-deoxy-L-arabinose-phosphoundecaprenol (alpha-L-Ara4N-phosphoundecaprenol) from the cytoplasmic to the periplasmic side of the inner membrane. In Escherichia coli (strain 55989 / EAEC), this protein is Probable 4-amino-4-deoxy-L-arabinose-phosphoundecaprenol flippase subunit ArnF.